The primary structure comprises 642 residues: Chaperone protein DnaK (642 aa).

The residue at position 200 (T200) is a Phosphothreonine; by autocatalysis. Residues 608 to 618 (QAESQAAGEGQ) show a composition bias toward low complexity. The segment at 608–642 (QAESQAAGEGQPDAGKKDDGNVVDAEFEEVKKDKQ) is disordered.

The protein belongs to the heat shock protein 70 family.

In terms of biological role, acts as a chaperone. This chain is Chaperone protein DnaK, found in Laribacter hongkongensis (strain HLHK9).